Reading from the N-terminus, the 494-residue chain is mRNA decay activator protein ZFP36L2 (494 aa).

Ser-57 carries the phosphoserine modification. The interval 93–113 (GGPTSYGTLKEPSGGGGTALL) is disordered. The residue at position 125 (Ser-125) is a Phosphoserine. Residues 153 to 158 (RYKTEL) carry the RNA-binding motif. 2 C3H1-type zinc fingers span residues 153–181 (RYKTELCRPFEESGTCKYGEKCQFAHGFH) and 191–219 (KYKTELCRTFHTIGFCPYGPRCHFIHNAD). The RNA-binding stretch occupies residues 170-211 (YGEKCQFAHGFHELRSLTRHPKYKTELCRTFHTIGFCPYGPR). Residue Thr-238 is modified to Phosphothreonine. Disordered stretches follow at residues 257–293 (SLSFSGFPSGHHQPPGGLESPLLLDSPTSRTPPPPSC) and 397–494 (QQQQ…ISDD). Residues 406-415 (PAQPPAPPSA) show a composition bias toward pro residues. 2 stretches are compositionally biased toward low complexity: residues 416-435 (TLPAGAAAPPSPPFSFQLPR) and 459-478 (YLSGSLSSGSLSGSESPSLD). 2 positions are modified to phosphoserine; by RPS6KA1: Ser-490 and Ser-492.

Associates with the cytoplasmic CCR4-NOT deadenylase to trigger ARE-containing mRNA deadenylation and decay processes. Interacts with CNOT7; this interaction is inhibited in response to phorbol 12-myristate 13-acetate (PMA) treatment in a p38 MAPK-dependent manner. Interacts with CNOT6L. In terms of processing, phosphorylated by RPS6KA1 at Ser-490 and Ser-492 upon phorbol 12-myristate 13-acetate (PMA) treatment; this phosphorylation results in dissociation of the CCR4-NOT-deadenylase complex and induces p38 MAPK-mediated stabilization of the low-density lipoprotein (LDL) receptor (LDLR) mRNA. Phosphorylation occurs during early preadipocyte differentiation. In terms of tissue distribution, expressed mainly in the basal epidermal layer, weakly in the suprabasal epidermal layers. Expressed in epidermal keratinocytes (at protein level). Expressed in oocytes.

The protein resides in the nucleus. It localises to the cytoplasm. Zinc-finger RNA-binding protein that destabilizes several cytoplasmic AU-rich element (ARE)-containing mRNA transcripts by promoting their poly(A) tail removal or deadenylation, and hence provide a mechanism for attenuating protein synthesis. Acts as a 3'-untranslated region (UTR) ARE mRNA-binding adapter protein to communicate signaling events to the mRNA decay machinery. Functions by recruiting the CCR4-NOT deadenylase complex and probably other components of the cytoplasmic RNA decay machinery to the bound ARE-containing mRNAs, and hence promotes ARE-mediated mRNA deadenylation and decay processes. Binds to 3'-UTR ARE of numerous mRNAs. Promotes ARE-containing mRNA decay of the low-density lipoprotein (LDL) receptor (LDLR) mRNA in response to phorbol 12-myristate 13-acetate (PMA) treatment in a p38 MAPK-dependent manner. Positively regulates early adipogenesis by promoting ARE-mediated mRNA decay of immediate early genes (IEGs). Plays a role in mature peripheral neuron integrity by promoting ARE-containing mRNA decay of the transcriptional repressor REST mRNA. Plays a role in ovulation and oocyte meiotic maturation by promoting ARE-mediated mRNA decay of the luteinizing hormone receptor LHCGR mRNA. Acts as a negative regulator of erythroid cell differentiation: promotes glucocorticoid-induced self-renewal of erythroid cells by binding mRNAs that are induced or highly expressed during terminal erythroid differentiation and promotes their degradation, preventing erythroid cell differentiation. In association with ZFP36L1 maintains quiescence on developing B lymphocytes by promoting ARE-mediated decay of several mRNAs encoding cell cycle regulators that help B cells progress through the cell cycle, and hence ensuring accurate variable-diversity-joining (VDJ) recombination process and functional immune cell formation. Together with ZFP36L1 is also necessary for thymocyte development and prevention of T-cell acute lymphoblastic leukemia (T-ALL) transformation by promoting ARE-mediated mRNA decay of the oncogenic transcription factor NOTCH1 mRNA. In Homo sapiens (Human), this protein is mRNA decay activator protein ZFP36L2.